Reading from the N-terminus, the 102-residue chain is MEEQKIRIRLKSYSHEIIDVSAKKIVDTVTRAGATIVGPVPLPTKKSVVCVIRSPHRHKDSREHFEMRTHKRLINVVDLTPRAVDALMRLDLSSEVNVEIKL.

Belongs to the universal ribosomal protein uS10 family. As to quaternary structure, part of the 30S ribosomal subunit.

Involved in the binding of tRNA to the ribosomes. The sequence is that of Small ribosomal subunit protein uS10 from Tropheryma whipplei (strain TW08/27) (Whipple's bacillus).